We begin with the raw amino-acid sequence, 144 residues long: Cytochrome c oxidase subunit 4 isoform 1, mitochondrial (144 aa).

The Mitochondrial matrix portion of the chain corresponds to 1–73; the sequence is SVVKSEDYTL…SFAEMNRGSN (73 aa). N6-acetyllysine; alternate is present on lysine 4. Lysine 4 is subject to N6-succinyllysine; alternate. Residues serine 31 and serine 33 each carry the phosphoserine modification. N6-acetyllysine; alternate is present on lysine 35. Lysine 35 bears the N6-succinyllysine; alternate mark. Position 42 is an N6-acetyllysine (lysine 42). A helical transmembrane segment spans residues 74-99; the sequence is EWKTVVGAAMFFIGFTAILIMLEKRY. At 100-144 the chain is on the mitochondrial intermembrane side; that stretch reads VYGPLPHTFDKEWVAMQTKRMLDLKVNPVDGLASKWDYEKKEWKK.

It belongs to the cytochrome c oxidase IV family. Component of the cytochrome c oxidase (complex IV, CIV), a multisubunit enzyme composed of 14 subunits. The complex is composed of a catalytic core of 3 subunits MT-CO1, MT-CO2 and MT-CO3, encoded in the mitochondrial DNA, and 11 supernumerary subunits COX4I, COX5A, COX5B, COX6A, COX6B, COX6C, COX7A, COX7B, COX7C, COX8 and NDUFA4, which are encoded in the nuclear genome. The complex exists as a monomer or a dimer and forms supercomplexes (SCs) in the inner mitochondrial membrane with NADH-ubiquinone oxidoreductase (complex I, CI) and ubiquinol-cytochrome c oxidoreductase (cytochrome b-c1 complex, complex III, CIII), resulting in different assemblies (supercomplex SCI(1)III(2)IV(1) and megacomplex MCI(2)III(2)IV(2)). Interacts with PHB2; the interaction decreases in absence of SPHK2. Interacts with AFG1L. Interacts with ABCB7; this interaction allows the regulation of cellular iron homeostasis and cellular reactive oxygen species (ROS) levels in cardiomyocytes. Interacts with FLVCR2; this interaction occurs in the absence of heme and is disrupted upon heme binding. Interacts with IRGC.

Its subcellular location is the mitochondrion inner membrane. The protein operates within energy metabolism; oxidative phosphorylation. Its function is as follows. Component of the cytochrome c oxidase, the last enzyme in the mitochondrial electron transport chain which drives oxidative phosphorylation. The respiratory chain contains 3 multisubunit complexes succinate dehydrogenase (complex II, CII), ubiquinol-cytochrome c oxidoreductase (cytochrome b-c1 complex, complex III, CIII) and cytochrome c oxidase (complex IV, CIV), that cooperate to transfer electrons derived from NADH and succinate to molecular oxygen, creating an electrochemical gradient over the inner membrane that drives transmembrane transport and the ATP synthase. Cytochrome c oxidase is the component of the respiratory chain that catalyzes the reduction of oxygen to water. Electrons originating from reduced cytochrome c in the intermembrane space (IMS) are transferred via the dinuclear copper A center (CU(A)) of subunit 2 and heme A of subunit 1 to the active site in subunit 1, a binuclear center (BNC) formed by heme A3 and copper B (CU(B)). The BNC reduces molecular oxygen to 2 water molecules using 4 electrons from cytochrome c in the IMS and 4 protons from the mitochondrial matrix. This Pithecia pithecia (White-faced saki) protein is Cytochrome c oxidase subunit 4 isoform 1, mitochondrial (COX4I1).